Consider the following 827-residue polypeptide: 6-phosphofructo-2-kinase 1 (827 aa).

Disordered regions lie at residues 1–97 (MFKP…ENSA) and 149–175 (TRHH…DGLI). Low complexity predominate over residues 31 to 41 (SQDSSYDLLSR). A compositionally biased stretch (basic and acidic residues) spans 42–59 (SSDDKIDAEKGPHDELSK). Residues 72 to 97 (TPISSNWNSPGITEENTPSDSPENSA) are compositionally biased toward polar residues. Ser92 is modified (phosphoserine). Thr157 is subject to Phosphothreonine. An ATP-binding site is contributed by 190–197 (GLPATGKS). Residues Asp277 and Cys309 contribute to the active site. Residue Arg343 participates in beta-D-fructose 6-phosphate binding. Ser404 (phosphoserine intermediate) is an active-site residue. Glu497 is an active-site residue. His565 (proton donor) is an active-site residue. Ser644, Ser652, Ser659, and Ser667 each carry phosphoserine. Disordered regions lie at residues 649-704 (APPS…SNFN) and 799-827 (HGKD…QSHV). The span at 671-682 (SASSSQSELSEQ) shows a compositional bias: low complexity. Residues 683-704 (PKNSVSAQTGSNNTTLIGSNFN) show a composition bias toward polar residues.

The catalysed reaction is beta-D-fructose 6-phosphate + ATP = beta-D-fructose 2,6-bisphosphate + ADP + H(+). Its activity is regulated as follows. Phosphorylation results in the activation of the kinase activity. Synthesis of fructose 2,6-bisphosphate. The polypeptide is 6-phosphofructo-2-kinase 1 (PFK26) (Saccharomyces cerevisiae (strain ATCC 204508 / S288c) (Baker's yeast)).